The chain runs to 278 residues: Cytidine kinase (278 aa).

Residue 203–208 participates in ATP binding; it reads TRGEKG. The active-site Proton acceptor is Asp-237.

The protein belongs to the carbohydrate kinase PfkB family. Requires Mg(2+) as cofactor.

It catalyses the reaction cytidine + ATP = CMP + ADP + H(+). Involved in nucleoside degradation. Phosphorylates cytidine to CMP. Can also act on deoxycytidine and uridine, but is most active with cytidine. ATP is the most preferred phosphate donor, but it can also use GTP, CTP or UTP. The sequence is that of Cytidine kinase from Thermococcus kodakarensis (strain ATCC BAA-918 / JCM 12380 / KOD1) (Pyrococcus kodakaraensis (strain KOD1)).